The chain runs to 237 residues: Large ribosomal subunit protein uL1 (237 aa).

This sequence belongs to the universal ribosomal protein uL1 family. As to quaternary structure, part of the 50S ribosomal subunit.

Its function is as follows. Binds directly to 23S rRNA. The L1 stalk is quite mobile in the ribosome, and is involved in E site tRNA release. In terms of biological role, protein L1 is also a translational repressor protein, it controls the translation of the L11 operon by binding to its mRNA. The chain is Large ribosomal subunit protein uL1 from Dehalococcoides mccartyi (strain ATCC BAA-2266 / KCTC 15142 / 195) (Dehalococcoides ethenogenes (strain 195)).